A 143-amino-acid chain; its full sequence is Large ribosomal subunit protein uL11 (143 aa).

Belongs to the universal ribosomal protein uL11 family. In terms of assembly, part of the ribosomal stalk of the 50S ribosomal subunit. Interacts with L10 and the large rRNA to form the base of the stalk. L10 forms an elongated spine to which L12 dimers bind in a sequential fashion forming a multimeric L10(L12)X complex. In terms of processing, one or more lysine residues are methylated.

In terms of biological role, forms part of the ribosomal stalk which helps the ribosome interact with GTP-bound translation factors. In Borrelia garinii subsp. bavariensis (strain ATCC BAA-2496 / DSM 23469 / PBi) (Borreliella bavariensis), this protein is Large ribosomal subunit protein uL11.